We begin with the raw amino-acid sequence, 320 residues long: ADP/ATP translocase 4 (320 aa).

The Mitochondrial intermembrane segment spans residues 1–20 (MSNESSKKQSSKKALFDPVS). The Solcar 1 repeat unit spans residues 19 to 111 (VSFSKDLLAG…FAFKDKYKEL (93 aa)). A helical membrane pass occupies residues 21 to 50 (FSKDLLAGGVAAAVSKTAVAPIERVKLLLQ). Over 51–87 (VQASSKQISPEARYKGMLDCLVRIPREQGFLSYWRGN) the chain is Mitochondrial matrix. The chain crosses the membrane as a helical span at residues 88–112 (LANVIRYFPTQALNFAFKDKYKELF). Residues Arg-93 and Lys-105 each contribute to the ADP site. The Mitochondrial intermembrane segment spans residues 113 to 122 (MSGVNKEKQF). Residues 123–143 (WRWFLANLASGGAAGATSLCV) form a helical membrane-spanning segment. 2 Solcar repeats span residues 124 to 214 (RWFL…VKGL) and 221 to 308 (TPFL…IKEF). The Mitochondrial matrix portion of the chain corresponds to 144-191 (VYPLDFARTRLGVDIGKGPEQRQFTGLGDCIMKIAKSDGLIGLYQGFG). Residues 192-212 (VSVQGIIVYRASYFGAYDTVK) traverse the membrane as a helical segment. Residues 213–223 (GLLPKPKETPF) are Mitochondrial intermembrane-facing. The helical transmembrane segment at 224–244 (LVSFIIAQIVTTCSGILSYPF) threads the bilayer. The Mitochondrial matrix segment spans residues 245-284 (DTVRRRMMMQSGESDRQYKGTIDCFLKIYRHEGVPAFFRG). ADP is bound at residue Arg-248. The tract at residues 248–253 (RRRMMM) is important for transport activity. The Nucleotide carrier signature motif signature appears at 248–253 (RRRMMM). A helical transmembrane segment spans residues 285–302 (AFSNILRGTGGALVLVLY). Topologically, residues 303–320 (DKIKEFLNIDVGGSSSGD) are mitochondrial intermembrane.

It belongs to the mitochondrial carrier (TC 2.A.29) family. Monomer. In terms of tissue distribution, specifically expressed in undifferentiated embryonic stem cells and germ cells. Expression is down-regulated after embryonic stem cells differentiation. In adults, only expressed in developing gametes in testis. In testis, expressed at higher level in spermatocytes. Expression is probably associated with entry of the male germ cells into meiosis. Expressed at very low level in Sertoli cells.

Its subcellular location is the mitochondrion inner membrane. The protein localises to the membrane. The protein resides in the cell projection. It localises to the cilium. It is found in the flagellum membrane. The catalysed reaction is ADP(in) + ATP(out) = ADP(out) + ATP(in). It catalyses the reaction dATP(out) + ADP(in) = dATP(in) + ADP(out). It carries out the reaction dADP(in) + ADP(out) = dADP(out) + ADP(in). The enzyme catalyses H(+)(in) = H(+)(out). With respect to regulation, the matrix-open state (m-state) is inhibited by the membrane-permeable bongkrekic acid (BKA). The cytoplasmic-open state (c-state) is inhibited by the membrane-impermeable toxic inhibitor carboxyatractyloside (CATR). Proton transporter activity is inhibited by ADP:ATP antiporter activity. Its function is as follows. ADP:ATP antiporter that mediates import of ADP into the mitochondrial matrix for ATP synthesis, and export of ATP out to fuel the cell. Cycles between the cytoplasmic-open state (c-state) and the matrix-open state (m-state): operates by the alternating access mechanism with a single substrate-binding site intermittently exposed to either the cytosolic (c-state) or matrix (m-state) side of the inner mitochondrial membrane. Specifically required during spermatogenesis, probably to mediate ADP:ATP exchange in spermatocytes. Large ATP supplies from mitochondria may be critical for normal progression of spermatogenesis during early stages of meiotic prophase I, including DNA double-strand break repair and chromosomal synapsis. In addition to its ADP:ATP antiporter activity, also involved in mitochondrial uncoupling and mitochondrial permeability transition pore (mPTP) activity. Plays a role in mitochondrial uncoupling by acting as a proton transporter: proton transport uncouples the proton flows via the electron transport chain and ATP synthase to reduce the efficiency of ATP production and cause mitochondrial thermogenesis. Proton transporter activity is inhibited by ADP:ATP antiporter activity, suggesting that SLC25A31/ANT4 acts as a master regulator of mitochondrial energy output by maintaining a delicate balance between ATP production (ADP:ATP antiporter activity) and thermogenesis (proton transporter activity). Proton transporter activity requires free fatty acids as cofactor, but does not transport it. Among nucleotides, may also exchange ADP for dATP and dADP. Also plays a key role in mPTP opening, a non-specific pore that enables free passage of the mitochondrial membranes to solutes of up to 1.5 kDa, and which contributes to cell death. It is however unclear if SLC25A31/ANT4 constitutes a pore-forming component of mPTP or regulates it. The chain is ADP/ATP translocase 4 from Mus musculus (Mouse).